A 260-amino-acid polypeptide reads, in one-letter code: Hemin import ATP-binding protein HmuV (260 aa).

The ABC transporter domain maps to 3 to 239; it reads LHAQQISLSI…QRLSEVYGCD (237 aa). Residue 35–42 participates in ATP binding; sequence GPNGSGKS.

The protein belongs to the ABC transporter superfamily. Heme (hemin) importer (TC 3.A.1.14.5) family. In terms of assembly, the complex is composed of two ATP-binding proteins (HmuV), two transmembrane proteins (HmuU) and a solute-binding protein (HmuT).

It localises to the cell inner membrane. Functionally, part of the ABC transporter complex HmuTUV involved in hemin import. Responsible for energy coupling to the transport system. This Ruegeria sp. (strain TM1040) (Silicibacter sp.) protein is Hemin import ATP-binding protein HmuV.